Consider the following 468-residue polypeptide: Dimethylamine methyltransferase MtbB1 (468 aa).

Pyl-356 is a non-standard amino acid (pyrrolysine).

The protein belongs to the dimethylamine methyltransferase family.

The catalysed reaction is Co(I)-[dimethylamine-specific corrinoid protein] + dimethylamine + H(+) = methyl-Co(III)-[dimethylamine-specific corrinoid protein] + methylamine. It participates in one-carbon metabolism; methanogenesis from dimethylamine. In terms of biological role, catalyzes the transfer of a methyl group from dimethylamine to the corrinoid cofactor of MtbC. In Methanosarcina mazei (strain ATCC BAA-159 / DSM 3647 / Goe1 / Go1 / JCM 11833 / OCM 88) (Methanosarcina frisia), this protein is Dimethylamine methyltransferase MtbB1 (mtbB1).